Reading from the N-terminus, the 658-residue chain is Glycogen debranching enzyme (658 aa).

Catalysis depends on D336, which acts as the Nucleophile. The active-site Proton donor is E371. Positions 459 to 484 (EANGEENRDGTNSNYSDNHGKEGLGG) are disordered.

The protein belongs to the glycosyl hydrolase 13 family.

The catalysed reaction is Hydrolysis of (1-&gt;6)-alpha-D-glucosidic linkages to branches with degrees of polymerization of three or four glucose residues in limit dextrin.. The protein operates within glycan degradation; glycogen degradation. Removes maltotriose and maltotetraose chains that are attached by 1,6-alpha-linkage to the limit dextrin main chain, generating a debranched limit dextrin. This Salmonella dublin (strain CT_02021853) protein is Glycogen debranching enzyme.